The primary structure comprises 122 residues: uncharacterized protein (122 aa).

The protein resides in the mitochondrion. This is an uncharacterized protein from Claviceps purpurea (Ergot fungus).